The sequence spans 437 residues: uncharacterized protein (437 aa).

A helical transmembrane segment spans residues 47–67 (LLIILIGFILLSSISAIQIDA).

It is found in the membrane. This is an uncharacterized protein from Methanocaldococcus jannaschii (strain ATCC 43067 / DSM 2661 / JAL-1 / JCM 10045 / NBRC 100440) (Methanococcus jannaschii).